The following is a 211-amino-acid chain: Protein-L-isoaspartate O-methyltransferase (211 aa).

Ser-60 is an active-site residue.

The protein belongs to the methyltransferase superfamily. L-isoaspartyl/D-aspartyl protein methyltransferase family.

The protein resides in the cytoplasm. It catalyses the reaction [protein]-L-isoaspartate + S-adenosyl-L-methionine = [protein]-L-isoaspartate alpha-methyl ester + S-adenosyl-L-homocysteine. Functionally, catalyzes the methyl esterification of L-isoaspartyl residues in peptides and proteins that result from spontaneous decomposition of normal L-aspartyl and L-asparaginyl residues. It plays a role in the repair and/or degradation of damaged proteins. This is Protein-L-isoaspartate O-methyltransferase from Hahella chejuensis (strain KCTC 2396).